We begin with the raw amino-acid sequence, 324 residues long: Glycerol-3-phosphate dehydrogenase [NAD(P)+] (324 aa).

Residues Ser10, Phe11, Arg31, and Lys106 each coordinate NADPH. Positions 106, 134, and 136 each coordinate sn-glycerol 3-phosphate. Ala138 is an NADPH binding site. Residues Lys189, Asp244, Ser254, Arg255, and Asn256 each coordinate sn-glycerol 3-phosphate. Residue Lys189 is the Proton acceptor of the active site. Position 255 (Arg255) interacts with NADPH. 2 residues coordinate NADPH: Ile279 and Glu281.

This sequence belongs to the NAD-dependent glycerol-3-phosphate dehydrogenase family.

It localises to the cytoplasm. It catalyses the reaction sn-glycerol 3-phosphate + NAD(+) = dihydroxyacetone phosphate + NADH + H(+). The enzyme catalyses sn-glycerol 3-phosphate + NADP(+) = dihydroxyacetone phosphate + NADPH + H(+). Its pathway is membrane lipid metabolism; glycerophospholipid metabolism. Its function is as follows. Catalyzes the reduction of the glycolytic intermediate dihydroxyacetone phosphate (DHAP) to sn-glycerol 3-phosphate (G3P), the key precursor for phospholipid synthesis. This is Glycerol-3-phosphate dehydrogenase [NAD(P)+] from Ehrlichia canis (strain Jake).